The chain runs to 149 residues: Large ribosomal subunit protein uL13 (149 aa).

It belongs to the universal ribosomal protein uL13 family. Part of the 50S ribosomal subunit.

This protein is one of the early assembly proteins of the 50S ribosomal subunit, although it is not seen to bind rRNA by itself. It is important during the early stages of 50S assembly. In Chlorobium phaeovibrioides (strain DSM 265 / 1930) (Prosthecochloris vibrioformis (strain DSM 265)), this protein is Large ribosomal subunit protein uL13.